Consider the following 96-residue polypeptide: Protein Vpr (96 aa).

Residues 1–42 are homooligomerization; it reads MEQAPGDQGPQREPYNEWALEILEELKNEAVRHFPRPWLHGL. Phosphoserine; by host occurs at positions 79, 94, and 96.

It belongs to the HIV-1 VPR protein family. In terms of assembly, homooligomer, may form homodimer. Interacts with p6-gag region of the Pr55 Gag precursor protein through a (Leu-X-X)4 motif near the C-terminus of the P6gag protein. Interacts with host UNG. May interact with host RAD23A/HHR23A. Interacts with host VPRBP/DCAF1, leading to hijack the CUL4A-RBX1-DDB1-DCAF1/VPRBP complex, mediating ubiquitination of host proteins such as TERT and ZGPAT and arrest of the cell cycle in G2 phase. In terms of processing, phosphorylated on several residues by host. These phosphorylations regulate VPR activity for the nuclear import of the HIV-1 pre-integration complex.

The protein resides in the virion. It localises to the host nucleus. The protein localises to the host extracellular space. Its function is as follows. During virus replication, may deplete host UNG protein, and incude G2-M cell cycle arrest. Acts by targeting specific host proteins for degradation by the 26S proteasome, through association with the cellular CUL4A-DDB1 E3 ligase complex by direct interaction with host VPRPB/DCAF-1. Cell cycle arrest reportedly occurs within hours of infection and is not blocked by antiviral agents, suggesting that it is initiated by the VPR carried into the virion. Additionally, VPR induces apoptosis in a cell cycle dependent manner suggesting that these two effects are mechanistically linked. Detected in the serum and cerebrospinal fluid of AIDS patient, VPR may also induce cell death to bystander cells. Functionally, during virus entry, plays a role in the transport of the viral pre-integration (PIC) complex to the host nucleus. This function is crucial for viral infection of non-dividing macrophages. May act directly at the nuclear pore complex, by binding nucleoporins phenylalanine-glycine (FG)-repeat regions. The polypeptide is Protein Vpr (Human immunodeficiency virus type 1 group M subtype F1 (isolate VI850) (HIV-1)).